A 127-amino-acid polypeptide reads, in one-letter code: Large ribosomal subunit protein bL12 (127 aa).

A disordered region spans residues 96–127 (GTPSTLKEAVSKDDAEEAAKQLKEAGAEVEVK). Basic and acidic residues predominate over residues 104 to 127 (AVSKDDAEEAAKQLKEAGAEVEVK).

This sequence belongs to the bacterial ribosomal protein bL12 family. As to quaternary structure, homodimer. Part of the ribosomal stalk of the 50S ribosomal subunit. Forms a multimeric L10(L12)X complex, where L10 forms an elongated spine to which 2 to 4 L12 dimers bind in a sequential fashion. Binds GTP-bound translation factors.

In terms of biological role, forms part of the ribosomal stalk which helps the ribosome interact with GTP-bound translation factors. Is thus essential for accurate translation. This is Large ribosomal subunit protein bL12 from Oleidesulfovibrio alaskensis (strain ATCC BAA-1058 / DSM 17464 / G20) (Desulfovibrio alaskensis).